Consider the following 483-residue polypeptide: Glutamyl-tRNA(Gln) amidotransferase subunit A (483 aa).

Residues K75 and S150 each act as charge relay system in the active site. S174 acts as the Acyl-ester intermediate in catalysis.

It belongs to the amidase family. GatA subfamily. In terms of assembly, heterotrimer of A, B and C subunits.

The enzyme catalyses L-glutamyl-tRNA(Gln) + L-glutamine + ATP + H2O = L-glutaminyl-tRNA(Gln) + L-glutamate + ADP + phosphate + H(+). In terms of biological role, allows the formation of correctly charged Gln-tRNA(Gln) through the transamidation of misacylated Glu-tRNA(Gln) in organisms which lack glutaminyl-tRNA synthetase. The reaction takes place in the presence of glutamine and ATP through an activated gamma-phospho-Glu-tRNA(Gln). In Legionella pneumophila (strain Paris), this protein is Glutamyl-tRNA(Gln) amidotransferase subunit A.